The chain runs to 601 residues: Potassium voltage-gated channel subfamily A member 5 (601 aa).

The segment at 1-200 is tetramerization domain; the sequence is MEIALVPLEN…FYQLGDEAME (200 aa). Over 1 to 236 the chain is Cytoplasmic; sequence MEIALVPLEN…LIFEYPESSG (236 aa). A disordered region spans residues 19–93; it reads GGEAGTGCSQ…DEEGEGDPAL (75 aa). A compositionally biased stretch (pro residues) spans 65–74; it reads RPLPPLPQDP. Residue Lys210 forms a Glycyl lysine isopeptide (Lys-Gly) (interchain with G-Cter in SUMO) linkage. Residues 237–258 traverse the membrane as a helical segment; it reads SARGIAIVSVLVILISIITFCL. The Extracellular segment spans residues 259-312; that stretch reads ETLPEFRDERELLRHPPVPHQPLGPSRGANGSGPLAPPSGPTVAPLLPRTLADP. Positions 275 to 297 are disordered; it reads PVPHQPLGPSRGANGSGPLAPPS. Asn288 is a glycosylation site (N-linked (GlcNAc...) asparagine). Residues 313–334 form a helical membrane-spanning segment; the sequence is FFIVETTCVIWFTFELLVRFFA. Cys335 carries the S-palmitoyl cysteine lipid modification. At 335–345 the chain is on the cytoplasmic side; it reads CPSKAEFSRNI. Residues 346 to 366 traverse the membrane as a helical segment; sequence MNIIDVVAIFPYFITLGTELA. At 367 to 383 the chain is on the extracellular side; sequence EQPGGGGGGQNGQQAMS. The chain crosses the membrane as a helical; Voltage-sensor span at residues 384 to 404; sequence LAILRVIRLVRVFRIFKLSRH. Topologically, residues 405–419 are cytoplasmic; sequence SKGLQILGKTLQASM. The S4-S5 linker stretch occupies residues 406 to 419; the sequence is KGLQILGKTLQASM. Residues 420–441 form a helical membrane-spanning segment; the sequence is RELGLLIFFLFIGVILFSSAVY. Residues 442 to 455 are Extracellular-facing; sequence FAEADNQETHFSSI. The segment at residues 456-467 is an intramembrane region (helical); that stretch reads PDAFWWAVVTMT. The Selectivity filter motif lies at 468–473; it reads TVGYGD. An intramembrane segment occupies 468–475; sequence TVGYGDMR. Topologically, residues 476–482 are extracellular; sequence PVTVGGK. The helical transmembrane segment at 483–511 threads the bilayer; that stretch reads IVGSLCAIAGVLTIALPVPVIVSNFNYFY. Residues 512–601 are Cytoplasmic-facing; the sequence is HRETDHEEQA…CLDTSRETDL (90 aa). The disordered stretch occupies residues 521–545; that stretch reads AALKEEQGSQSHGTGLDSGGPRKAS. Residue Lys524 forms a Glycyl lysine isopeptide (Lys-Gly) (interchain with G-Cter in SUMO) linkage. A PDZ-binding motif is present at residues 599-601; the sequence is TDL.

This sequence belongs to the potassium channel family. A (Shaker) (TC 1.A.1.2) subfamily. Kv1.5/KCNA5 sub-subfamily. As to quaternary structure, homotetramer and heterotetramer of potassium channel proteins. Interacts with DLG1, which enhances channel currents. Forms a ternary complex with DLG1 and CAV3. Interacts with KCNAB1. Interacts with UBE2I. Interacts with XIRP2; the interaction is required for normal action potential configuration in the heart. In terms of processing, glycosylated. Post-translationally, sumoylated on Lys-210, and Lys-524, preferentially with SUMO3. Sumoylation regulates the voltage sensitivity of the channel.

The protein resides in the cell membrane. The enzyme catalyses K(+)(in) = K(+)(out). Voltage-gated potassium channel that mediates transmembrane potassium transport in excitable membranes. Forms tetrameric potassium-selective channels through which potassium ions pass in accordance with their electrochemical gradient. The channel alternates between opened and closed conformations in response to the voltage difference across the membrane. Can form functional homotetrameric channels and heterotetrameric channels that contain variable proportions of KCNA1, KCNA2, KCNA4, KCNA5, and possibly other family members as well; channel properties depend on the type of alpha subunits that are part of the channel. Channel properties are modulated by cytoplasmic beta subunits that regulate the subcellular location of the alpha subunits and promote rapid inactivation. Homotetrameric channels display rapid activation and slow inactivation. Required for normal electrical conduction including formation of the infranodal ventricular conduction system and normal action potential configuration, as a result of its interaction with XIRP2. May play a role in regulating the secretion of insulin in normal pancreatic islets. The chain is Potassium voltage-gated channel subfamily A member 5 (KCNA5) from Mustela putorius furo (European domestic ferret).